The sequence spans 430 residues: Histidinol dehydrogenase (430 aa).

NAD(+) contacts are provided by Tyr130, Gln191, and Asn214. Substrate is bound by residues Ser237, Gln259, and His262. Zn(2+) contacts are provided by Gln259 and His262. Residues Glu327 and His328 each act as proton acceptor in the active site. Substrate contacts are provided by His328, Asp361, Glu415, and His420. Asp361 contacts Zn(2+). Position 420 (His420) interacts with Zn(2+).

It belongs to the histidinol dehydrogenase family. Requires Zn(2+) as cofactor.

The catalysed reaction is L-histidinol + 2 NAD(+) + H2O = L-histidine + 2 NADH + 3 H(+). It functions in the pathway amino-acid biosynthesis; L-histidine biosynthesis; L-histidine from 5-phospho-alpha-D-ribose 1-diphosphate: step 9/9. In terms of biological role, catalyzes the sequential NAD-dependent oxidations of L-histidinol to L-histidinaldehyde and then to L-histidine. This is Histidinol dehydrogenase from Brucella melitensis biotype 1 (strain ATCC 23456 / CCUG 17765 / NCTC 10094 / 16M).